We begin with the raw amino-acid sequence, 111 residues long: UPF0321 protein P20C8.02c (111 aa).

The first 17 residues, Met-1–Ala-17, serve as a signal peptide directing secretion. N-linked (GlcNAc...) asparagine glycosylation is present at Asn-20.

It belongs to the UPF0321 family.

This chain is UPF0321 protein P20C8.02c, found in Schizosaccharomyces pombe (strain 972 / ATCC 24843) (Fission yeast).